The primary structure comprises 235 residues: MFIWTSGRTSSSYRHDEKRNIYQKIRDHDLLDKRKTVTALKAGEDRAILLGLAMMVCSIMMYFLLGITLLRSYMQSVWTEEAQRALLNVSITETFNCSFSCGPDCWKLSQYPCLQVYVNLTSSGEKLLLYHTEETMKINQKCSYIPKCGNNFEESMSLVSVVMENFRRHQHFPCYSDPEGNQKSVILTKLYSSNVLFHSLFWPTCMMAGGVAIVAMVKLTQYLSLLCERIQRINR.

A ball and chain region spans residues 1–45 (MFIWTSGRTSSSYRHDEKRNIYQKIRDHDLLDKRKTVTALKAGED). Residues 1-46 (MFIWTSGRTSSSYRHDEKRNIYQKIRDHDLLDKRKTVTALKAGEDR) lie on the Cytoplasmic side of the membrane. A helical transmembrane segment spans residues 47–67 (AILLGLAMMVCSIMMYFLLGI). Residues 68-194 (TLLRSYMQSV…VILTKLYSSN (127 aa)) are Extracellular-facing. N-linked (GlcNAc...) asparagine glycans are attached at residues N88, N96, and N119. The chain crosses the membrane as a helical span at residues 195-215 (VLFHSLFWPTCMMAGGVAIVA). Residues 216 to 235 (MVKLTQYLSLLCERIQRINR) are Cytoplasmic-facing.

The protein belongs to the KCNMB (TC 8.A.14.1) family. KCNMB2 subfamily. As to quaternary structure, interacts with KCNMA1 tetramer. There are probably 4 molecules of KCMNB2 per KCNMA1 tetramer. Post-translationally, N-glycosylated. As to expression, highly expressed in brain and heart. Also expressed in lung.

It localises to the membrane. Regulatory subunit of the calcium activated potassium KCNMA1 (maxiK) channel. Modulates the calcium sensitivity and gating kinetics of KCNMA1, thereby contributing to KCNMA1 channel diversity. Acts as a negative regulator that confers rapid and complete inactivation of KCNMA1 channel complex. This chain is Calcium-activated potassium channel subunit beta-2 (Kcnmb2), found in Rattus norvegicus (Rat).